Reading from the N-terminus, the 214-residue chain is Large ribosomal subunit protein bL25 (214 aa).

Disordered stretches follow at residues 1-23 (MSNE…SRRL) and 182-214 (DHDQ…ASEE). A compositionally biased stretch (acidic residues) spans 200–214 (DDDDAAEGEEAASEE).

This sequence belongs to the bacterial ribosomal protein bL25 family. CTC subfamily. As to quaternary structure, part of the 50S ribosomal subunit; part of the 5S rRNA/L5/L18/L25 subcomplex. Contacts the 5S rRNA. Binds to the 5S rRNA independently of L5 and L18.

In terms of biological role, this is one of the proteins that binds to the 5S RNA in the ribosome where it forms part of the central protuberance. In Alcanivorax borkumensis (strain ATCC 700651 / DSM 11573 / NCIMB 13689 / SK2), this protein is Large ribosomal subunit protein bL25.